A 557-amino-acid chain; its full sequence is MDSTVPSALELPQRLALNPRESPRSPEEEEPHLLSSLAAVQTLASVIRPCYGPHGRQKFLVTMKGETVCTGCATAILRALELEHPAAWLLREAGQTQAENSGDGTAFVVLLTEALLEQAEQLLKAGLPRPQLREAYATATAEVLATLPSLAIQSLGPLEDPSWALHSVMNTHTLSPMDHLTKLVAHACWAIKELDGSFKPERVGVCALPGGTLEDSCLLPGLAISGKLCGQMATVLSGARVALFACPFGPAHPNAPATARLSSPADLAQFSKGSDQLLEKQVGQLAAAGINVAVVLGEVDEETLTLADKYGIVVIQARSWMEIIYLSEVLDTPLLPRLLPPQRPGKCQRVYRQELGDGLAVVFEWECTGTPALTVVLRGATTQGLRSAEQAVYHGIDAYFQLCQDPRLIPGAGATEMALAKMLSDKGSRLEGPSGPAFLAFAWALKYLPKTLAENAGLAVSDVMAEMSGVHQGGNLLMGVGTEGIINVAQEGVWDTLIVKAQGFRAVAEVVLQLVTVDEIVVAKKSPTHQEIWNPDSKKTKKHPPPVETKKILGLNN.

Disordered stretches follow at residues Met1–Leu33 and Glu531–Asn557.

The protein belongs to the TCP-1 chaperonin family.

It is found in the cytoplasm. Possible molecular chaperone; assists the folding of proteins upon ATP hydrolysis. This Homo sapiens (Human) protein is T-complex protein 1 subunit theta-like 2 (CCT8L2).